A 155-amino-acid polypeptide reads, in one-letter code: UPF0178 protein TDE_2151 (155 aa).

This sequence belongs to the UPF0178 family.

In Treponema denticola (strain ATCC 35405 / DSM 14222 / CIP 103919 / JCM 8153 / KCTC 15104), this protein is UPF0178 protein TDE_2151.